The sequence spans 352 residues: Ion-translocating oxidoreductase complex subunit D (352 aa).

4 consecutive transmembrane segments (helical) span residues 20–40 (IMLL…WFFG), 42–62 (GTLF…AIVL), 69–91 (VASH…SIPP), and 123–143 (PAMI…TSWL). An FMN phosphoryl threonine modification is found at Thr187. 5 consecutive transmembrane segments (helical) span residues 215 to 235 (LAGV…VFLL), 242 to 262 (WHIP…GWLF), 267 to 287 (LASP…FFIL), 301 to 321 (LIFG…GGYP), and 322 to 342 (DGVA…DYYT).

The protein belongs to the NqrB/RnfD family. The complex is composed of six subunits: RsxA, RsxB, RsxC, RsxD, RsxE and RsxG. Requires FMN as cofactor.

It is found in the cell inner membrane. Functionally, part of a membrane-bound complex that couples electron transfer with translocation of ions across the membrane. Required to maintain the reduced state of SoxR. This Salmonella agona (strain SL483) protein is Ion-translocating oxidoreductase complex subunit D.